The primary structure comprises 405 residues: Serine--glyoxylate aminotransferase (405 aa).

Position 196 is an N6-(pyridoxal phosphate)lysine (lysine 196).

This sequence belongs to the class-V pyridoxal-phosphate-dependent aminotransferase family. It depends on pyridoxal 5'-phosphate as a cofactor.

It catalyses the reaction glyoxylate + L-serine = 3-hydroxypyruvate + glycine. It participates in one-carbon metabolism; formaldehyde assimilation via serine pathway. This Hyphomicrobium methylovorum protein is Serine--glyoxylate aminotransferase (sgaA).